The chain runs to 2035 residues: Host cell factor 1 (2035 aa).

An N-acetylalanine modification is found at Ala-2. Ser-6 carries the post-translational modification Phosphoserine. Kelch repeat units follow at residues Leu-44–Cys-89, Arg-93–His-140, Lys-148–Gly-194, Lys-217–Asn-265, and Lys-266–Thr-313. Glycyl lysine isopeptide (Lys-Gly) (interchain with G-Cter in ubiquitin) cross-links involve residues Lys-105, Lys-163, and Lys-244. A Glycyl lysine isopeptide (Lys-Gly) (interchain with G-Cter in SUMO2) cross-link involves residue Lys-282. Lys-288 is subject to N6-acetyllysine. Lys-363 participates in a covalent cross-link: Glycyl lysine isopeptide (Lys-Gly) (interchain with G-Cter in ubiquitin). Residues Pro-366–Thr-466 enclose the Fibronectin type-III 1 domain. The segment at Ala-407–Ala-434 is disordered. Position 411 is a phosphoserine (Ser-411). Residues Thr-413–Pro-428 show a composition bias toward pro residues. A required for interaction with OGT region spans residues Leu-500 to Ala-550. An omega-N-methylarginine mark is found at Arg-504 and Arg-524. A phosphoserine mark is found at Ser-598, Ser-666, and Ser-669. Residues Leu-610–Leu-722 are interaction with SIN3A. Residues Ile-750–Thr-902 form an interaction with ZBTB17 region. Lys-813 is modified (N6-acetyllysine). Residues Lys-813–Thr-912 form an interaction with GABP2 region. 3 HCF repeat repeats span residues Thr-1010 to Ala-1035, Val-1072 to Asn-1097, and Gln-1101 to Ser-1126. The HCF repeat 4; degenerate repeat unit spans residues Ala-1158–Thr-1183. Ser-1205 is subject to Phosphoserine. Arg-1219 bears the Omega-N-methylarginine mark. Ser-1224 bears the Phosphoserine mark. HCF repeat repeat units lie at residues Thr-1286–Gly-1311 and Gln-1314–Asn-1339. Disordered regions lie at residues Pro-1292–Val-1371, Thr-1435–Ser-1470, and Val-1487–Pro-1515. 3 stretches are compositionally biased toward low complexity: residues Thr-1299 to Ser-1312, Thr-1329 to Asn-1339, and Thr-1362 to Val-1371. An HCF repeat 7; degenerate repeat occupies Gln-1349–Gly-1374. The HCF repeat 8 repeat unit spans residues Gln-1414–Asn-1439. Residue Thr-1491 is modified to Phosphothreonine. Residues Val-1493 to Glu-1502 are compositionally biased toward pro residues. Ser-1497, Ser-1507, and Ser-1771 each carry phosphoserine. 2 consecutive Fibronectin type-III domains span residues Leu-1797 to Pro-1888 and Phe-1890 to Asp-2006. Residues Lys-1807 and Lys-1808 each participate in a glycyl lysine isopeptide (Lys-Gly) (interchain with G-Cter in ubiquitin) cross-link. Ser-1838 bears the Phosphoserine mark. Positions Ala-1994–Gln-2035 are disordered. Lys-2005 carries the post-translational modification N6-acetyllysine. Lys-2024 participates in a covalent cross-link: Glycyl lysine isopeptide (Lys-Gly) (interchain with G-Cter in SUMO2).

Composed predominantly of six polypeptides ranging from 110 to 150 kDa and a minor 300 kDa polypeptide. The majority of N- and C-terminal cleavage products remain tightly, albeit non-covalently, associated. Interacts with POU2F1, CREB3, ZBTB17, EGR2, E2F4, CREBZF, SP1, GABP2, Sin3 HDAC complex (SIN3A, HDAC1, HDAC2, SUDS3), SAP30, SIN3B and FHL2. Component of a MLL1 complex, composed of at least the core components KMT2A/MLL1, ASH2L, HCFC1, WDR5 and RBBP5, as well as the facultative components BACC1, CHD8, DPY30, E2F6, HCFC2, HSP70, INO80C, KANSL1, LAS1L, MAX, MCRS1, MEN1, MGA, KAT8, PELP1, PHF20, PRP31, RING2, RUVBL1, RUVBL2, SENP3, TAF1, TAF4, TAF6, TAF7, TAF9 and TEX10. Component of a THAP1/THAP3-HCFC1-OGT complex that is required for the regulation of the transcriptional activity of RRM1. Interacts directly with THAP3 (via its HBM). Interacts (via the Kelch-repeat domain) with THAP1 (via the HBM); the interaction recruits HCHC1 to the RRM1. Interacts with THAP7 and THAP11 (via the HMB). Interacts directly with OGT; the interaction, which requires the HCFC1 cleavage site domain, glycosylates and promotes the proteolytic processing of HCFC1, retains OGT in the nucleus and impacts the expression of herpes simplex virus immediate early viral genes. Component of the SET1 complex, at least composed of the catalytic subunit (SETD1A or SETD1B), WDR5, WDR82, RBBP5, ASH2L, CXXC1, HCFC1 and DPY30. Component of the NSL complex at least composed of MOF/KAT8, KANSL1, KANSL2, KANSL3, MCRS1, PHF20, OGT1/OGT, WDR5 and HCFC1. Component of a complex at least composed of ZNF335, HCFC1, CCAR2, EMSY, MKI67, RBBP5, ASH2L and WDR5; the complex is formed as a result of interactions between components of a nuclear receptor-mediated transcription complex and a histone methylation complex. Within the complex interacts with ZNF335. Interacts with TET2 and TET3. Interacts with HCFC1R1. Interacts with THAP11. Interacts (via Kelch domain) with KMT2E/MLL5 isoform 3 (via HBM motif). Interacts with E2F1. Accessory scaffold component of the polycomb repressive deubiquitinase (PR-DUB) complex, at least composed of BAP1, one of ASXL1, ASXL2 or (probably) ASXL3 and one of MBD5 or MBD6; the PR-DUB core associates with a number of accessory proteins, including FOXK1, FOXK2, KDM1B, HCFC1, YY1 and OGT. Interacts with YY1 (via Gly-rich region); the interaction is direct. Interacts with BAP1 (via HBM-like motif). As to quaternary structure, (Microbial infection) Associates with the VP16-induced complex; binding to HCFC1 activates the viral transcriptional activator VP16 for association with POU2F1, to form a multiprotein-DNA complex responsible for activating transcription of the viral immediate early genes. Interacts with the viral transactivator protein VP16. In terms of processing, proteolytically cleaved at one or several PPCE--THET sites within the HCF repeats. Further cleavage of the primary N- and C-terminal chains results in a 'trimming' and accumulation of the smaller chains. Cleavage is promoted by O-glycosylation. O-glycosylated. GlcNAcylation by OGT promotes proteolytic processing. Post-translationally, ubiquitinated. Lys-1807 and Lys-1808 are ubiquitinated both via 'Lys-48'- and 'Lys-63'-linked polyubiquitin chains. BAP1 mediated deubiquitination of 'Lys-48'-linked polyubiquitin chains; deubiquitination by BAP1 does not seem to stabilize the protein. Highly expressed in fetal tissues and the adult kidney. Present in all tissues tested.

Its subcellular location is the cytoplasm. The protein resides in the nucleus. Functionally, transcriptional coregulator. Serves as a scaffold protein, bridging interactions between transcription factors, including THAP11 and ZNF143, and transcriptional coregulators. Involved in control of the cell cycle. Also antagonizes transactivation by ZBTB17 and GABP2; represses ZBTB17 activation of the p15(INK4b) promoter and inhibits its ability to recruit p300. Coactivator for EGR2 and GABP2. Tethers the chromatin modifying Set1/Ash2 histone H3 'Lys-4' methyltransferase (H3K4me) and Sin3 histone deacetylase (HDAC) complexes (involved in the activation and repression of transcription, respectively) together. Component of a THAP1/THAP3-HCFC1-OGT complex that is required for the regulation of the transcriptional activity of RRM1. As part of the NSL complex it may be involved in acetylation of nucleosomal histone H4 on several lysine residues. Recruits KMT2E/MLL5 to E2F1 responsive promoters promoting transcriptional activation and thereby facilitates G1 to S phase transition. Modulates expression of homeobox protein PDX1, perhaps acting in concert with transcription factor E2F1, thereby regulating pancreatic beta-cell growth and glucose-stimulated insulin secretion. May negatively modulate transcriptional activity of FOXO3. In terms of biological role, (Microbial infection) In case of human herpes simplex virus (HSV) infection, HCFC1 forms a multiprotein-DNA complex with the viral transactivator protein VP16 and POU2F1 thereby enabling the transcription of the viral immediate early genes. The protein is Host cell factor 1 of Homo sapiens (Human).